Reading from the N-terminus, the 366-residue chain is 3-dehydroquinate synthase (366 aa).

NAD(+)-binding positions include 73 to 78 (DGERAK), 107 to 111 (GVVGD), 131 to 132 (TT), K144, and K153. 3 residues coordinate Zn(2+): E186, H249, and H266.

This sequence belongs to the sugar phosphate cyclases superfamily. Dehydroquinate synthase family. It depends on Co(2+) as a cofactor. Zn(2+) is required as a cofactor. Requires NAD(+) as cofactor.

It is found in the cytoplasm. The catalysed reaction is 7-phospho-2-dehydro-3-deoxy-D-arabino-heptonate = 3-dehydroquinate + phosphate. The protein operates within metabolic intermediate biosynthesis; chorismate biosynthesis; chorismate from D-erythrose 4-phosphate and phosphoenolpyruvate: step 2/7. Its function is as follows. Catalyzes the conversion of 3-deoxy-D-arabino-heptulosonate 7-phosphate (DAHP) to dehydroquinate (DHQ). This chain is 3-dehydroquinate synthase, found in Koribacter versatilis (strain Ellin345).